Reading from the N-terminus, the 242-residue chain is 1-(5-phosphoribosyl)-5-[(5-phosphoribosylamino)methylideneamino] imidazole-4-carboxamide isomerase (242 aa).

Catalysis depends on Asp-8, which acts as the Proton acceptor. Asp-129 (proton donor) is an active-site residue.

It belongs to the HisA/HisF family.

Its subcellular location is the cytoplasm. It carries out the reaction 1-(5-phospho-beta-D-ribosyl)-5-[(5-phospho-beta-D-ribosylamino)methylideneamino]imidazole-4-carboxamide = 5-[(5-phospho-1-deoxy-D-ribulos-1-ylimino)methylamino]-1-(5-phospho-beta-D-ribosyl)imidazole-4-carboxamide. It functions in the pathway amino-acid biosynthesis; L-histidine biosynthesis; L-histidine from 5-phospho-alpha-D-ribose 1-diphosphate: step 4/9. The polypeptide is 1-(5-phosphoribosyl)-5-[(5-phosphoribosylamino)methylideneamino] imidazole-4-carboxamide isomerase (Maridesulfovibrio salexigens (strain ATCC 14822 / DSM 2638 / NCIMB 8403 / VKM B-1763) (Desulfovibrio salexigens)).